A 123-amino-acid polypeptide reads, in one-letter code: MADLAKIVEDLSNLTLLEAAELSKLLEEKWGVSAAAPVAVAAVAGAAAPAAEEKTEFDVILVEGGAQKINVIKEVRALTGLGLKEAKDLVEGAPKPIKEGASKEEAEKIKSQLEAAGAKVELK.

The protein belongs to the bacterial ribosomal protein bL12 family. As to quaternary structure, homodimer. Part of the ribosomal stalk of the 50S ribosomal subunit. Forms a multimeric L10(L12)X complex, where L10 forms an elongated spine to which 2 to 4 L12 dimers bind in a sequential fashion. Binds GTP-bound translation factors.

Its function is as follows. Forms part of the ribosomal stalk which helps the ribosome interact with GTP-bound translation factors. Is thus essential for accurate translation. This is Large ribosomal subunit protein bL12 from Bartonella tribocorum (strain CIP 105476 / IBS 506).